The primary structure comprises 513 residues: MQLNSTEISELIKQRIAQFNVVSEAHNEGTIVSVSDGVIRIHGLAECMQGEMISLPGNRYAIALNLERDSVGAVVMGPYADLAEGMKVKCTGRILEVPVGRGLLGRVVNTLGAPIDGKGPLENDGFSAVEAIAPGVIERQSVDQPVQTGYKSVDAMIPIGRGQRELIIGDRQTGKTALAIDAIINQRDSGIKCVYVAIGQKASTISNVVRKLEEHGALANTIVVVATASESAALQYLAPYAGCAMGEYFRDRGEDALIVYDDLSKQAVAYRQISLLLRRPPGREAFPGDVFYLHSRLLERAARVNAEYVEAFTKGEVKGKTGSLTALPIIETQAGDVSAFVPTNVISITDGQIFLETNLFNAGIRPAVNPGISVSRVGGAAQTKIMKKLSGGIRTALAQYRELAAFSQFASDLDDATRKQLDHGQKVTELLKQKQYAPMSVAQQSLVLFAAERGYLADVELAKIGSFEAALLAYVDRDHAPLMQEINQSGGYNDEIEGKLKGILDSFKATQSW.

Residue 169–176 (GDRQTGKT) participates in ATP binding.

It belongs to the ATPase alpha/beta chains family. As to quaternary structure, F-type ATPases have 2 components, CF(1) - the catalytic core - and CF(0) - the membrane proton channel. CF(1) has five subunits: alpha(3), beta(3), gamma(1), delta(1), epsilon(1). CF(0) has three main subunits: a(1), b(2) and c(9-12). The alpha and beta chains form an alternating ring which encloses part of the gamma chain. CF(1) is attached to CF(0) by a central stalk formed by the gamma and epsilon chains, while a peripheral stalk is formed by the delta and b chains.

The protein localises to the cell inner membrane. The enzyme catalyses ATP + H2O + 4 H(+)(in) = ADP + phosphate + 5 H(+)(out). Produces ATP from ADP in the presence of a proton gradient across the membrane. The alpha chain is a regulatory subunit. The polypeptide is ATP synthase subunit alpha (Klebsiella pneumoniae subsp. pneumoniae (strain ATCC 700721 / MGH 78578)).